A 1087-amino-acid polypeptide reads, in one-letter code: Error-prone DNA polymerase 2 (1087 aa).

The disordered stretch occupies residues 1033-1064; that stretch reads DGAFRPPTGRGDEFAHGSPGSADSRGKAPPGV.

It belongs to the DNA polymerase type-C family. DnaE2 subfamily.

It localises to the cytoplasm. It carries out the reaction DNA(n) + a 2'-deoxyribonucleoside 5'-triphosphate = DNA(n+1) + diphosphate. Its function is as follows. DNA polymerase involved in damage-induced mutagenesis and translesion synthesis (TLS). It is not the major replicative DNA polymerase. The polypeptide is Error-prone DNA polymerase 2 (Rhizobium meliloti (strain 1021) (Ensifer meliloti)).